The sequence spans 371 residues: Cuticle collagen 71 (371 aa).

Residues 38–60 (GYAAVTFSTVSVICFCVTMPVVF) form a helical membrane-spanning segment. Disordered regions lie at residues 108–127 (AGYD…GGDA) and 153–371 (EGPH…GTRR). A compositionally biased stretch (pro residues) spans 174-186 (PGPPGPPGPPGRP). Residues 188 to 201 (PNGKAGANGLNGNP) are compositionally biased toward low complexity. Over residues 202–222 (GRPPEAPCEPVTPPPCPPCPA) the composition is skewed to pro residues. Positions 223-240 (GPKGAPGQAGYPGADGQP) are enriched in low complexity. One can recognise a Collagen-like domain in the interval 223-280 (GPKGAPGQAGYPGADGQPGSQGDNGEKGSDGAAGEKGRPGPLGKIGEPGATGETGENA). The span at 246-260 (NGEKGSDGAAGEKGR) shows a compositional bias: basic and acidic residues. Positions 314-323 (AGAPGAPGEN) are enriched in low complexity. Positions 340–349 (HDGKAGRAGE) are enriched in basic and acidic residues.

This sequence belongs to the cuticular collagen family. Collagen polypeptide chains are complexed within the cuticle by disulfide bonds and other types of covalent cross-links.

The protein localises to the membrane. Its subcellular location is the nucleus. Probable cuticular collagen-like protein. Nematode cuticles are composed largely of collagen-like proteins. The cuticle functions both as an exoskeleton and as a barrier to protect the worm from its environment. Acts downstream of the Wnt signaling pathway, perhaps in the formation of the adult cuticle. This is Cuticle collagen 71 from Caenorhabditis elegans.